The sequence spans 70 residues: Brevinin-ALb (70 aa).

The signal sequence occupies residues 1–22 (MFTLKKSLLLLFFLGTINLSLC). A propeptide spanning residues 23-46 (EQERDADEEERRDDDEMDVEVEKR) is cleaved from the precursor. Cys64 and Cys70 are joined by a disulfide.

In terms of tissue distribution, expressed by the skin glands.

The protein resides in the secreted. Antimicrobial peptide with activity against Gram-positive and Gram-negative bacteria and against fungi. Has been tested against S.aureus (MIC=5.5 ug/mL), E.coli (MIC=6.5 ug/mL), B.dysenteriae (MIC=2.2 ug/mL), and C.albicans (MIC=7.5 ug/mL). Can regulate or mediate antimicrobial response by stimulating mast cell degranulation. Induces histamine release. Shows cytotoxicity toward solid tumor cell line HepG2. Also shows a potent hemolytic activity (LD(50)=5 ug/ml). This chain is Brevinin-ALb, found in Amolops loloensis (Lolokou Sucker Frog).